The chain runs to 485 residues: Probable aspartic-type endopeptidase opsB (485 aa).

Positions methionine 1–cysteine 20 are cleaved as a signal peptide. The Peptidase A1 domain occupies tyrosine 69–alanine 397. An N-linked (GlcNAc...) asparagine glycan is attached at asparagine 72. Aspartate 87 is an active-site residue. N-linked (GlcNAc...) asparagine glycosylation is found at asparagine 99, asparagine 107, asparagine 111, and asparagine 132. Aspartate 285 is a catalytic residue. Asparagine 328, asparagine 337, and asparagine 402 each carry an N-linked (GlcNAc...) asparagine glycan. The GPI-anchor amidated serine moiety is linked to residue serine 461. Residues alanine 462–leucine 485 constitute a propeptide, removed in mature form.

Belongs to the peptidase A1 family.

Its subcellular location is the cell membrane. In terms of biological role, probable GPI-anchored aspartic-type endopeptidase which contributes to virulence. The chain is Probable aspartic-type endopeptidase opsB (opsB) from Aspergillus fumigatus (strain ATCC MYA-4609 / CBS 101355 / FGSC A1100 / Af293) (Neosartorya fumigata).